The chain runs to 378 residues: uncharacterized protein (378 aa).

The next 11 helical transmembrane spans lie at 12 to 34 (SLAF…STFF), 44 to 66 (VKIY…IFLG), 92 to 112 (SIAL…LMLI), 132 to 154 (GFAS…IFLA), 161 to 180 (EVYA…SIIT), 200 to 222 (TFLL…IAMM), 235 to 257 (VEIY…FWGV), 267 to 285 (VFPL…LFFA), 290 to 312 (LIFV…RVYI), 327 to 349 (FLSL…FLFI), and 356 to 373 (LSAL…FIYL).

It localises to the cell membrane. This is an uncharacterized protein from Aquifex aeolicus (strain VF5).